We begin with the raw amino-acid sequence, 74 residues long: NADH dehydrogenase [ubiquinone] 1 alpha subcomplex assembly factor 8 (74 aa).

One can recognise a CHCH domain in the interval 22-69 (LAACGAEAAAYGRCVQASTAPGGRLSKDFCAREFEALRSCFAAAAKKT). 2 short sequence motifs (cx9C motif) span residues 25–35 (CGAEAAAYGRC) and 51–61 (CAREFEALRSC). 2 disulfides stabilise this stretch: cysteine 25-cysteine 61 and cysteine 35-cysteine 51.

In terms of assembly, interacts with NDUFAF5.

It localises to the mitochondrion. Its function is as follows. Involved in the assembly of mitochondrial NADH:ubiquinone oxidoreductase complex (complex I, MT-ND1). Required to stabilize NDUFAF5. This Homo sapiens (Human) protein is NADH dehydrogenase [ubiquinone] 1 alpha subcomplex assembly factor 8.